A 288-amino-acid polypeptide reads, in one-letter code: Nucleotide-binding protein Tola_2941 (288 aa).

8–15 provides a ligand contact to ATP; the sequence is GRSGSGKT. A GTP-binding site is contributed by 56–59; it reads DVRN.

The protein belongs to the RapZ-like family.

Functionally, displays ATPase and GTPase activities. The sequence is that of Nucleotide-binding protein Tola_2941 from Tolumonas auensis (strain DSM 9187 / NBRC 110442 / TA 4).